We begin with the raw amino-acid sequence, 269 residues long: GTP cyclohydrolase FolE2 (269 aa).

This sequence belongs to the GTP cyclohydrolase IV family.

It catalyses the reaction GTP + H2O = 7,8-dihydroneopterin 3'-triphosphate + formate + H(+). Its pathway is cofactor biosynthesis; 7,8-dihydroneopterin triphosphate biosynthesis; 7,8-dihydroneopterin triphosphate from GTP: step 1/1. In terms of biological role, converts GTP to 7,8-dihydroneopterin triphosphate. In Burkholderia multivorans (strain ATCC 17616 / 249), this protein is GTP cyclohydrolase FolE2.